The primary structure comprises 603 residues: MALPSMSVSEFDALIEQCTNEKIPNGEIDLSAALELSDMIRSRRLPPKDAMRCLKKRVLQTRNNQNLQFSVWRLVEVCMKNGGVPFLKEVCSREFMDCLEQVILAESTDYELEQFCSRLVGELYLAFKNDSQLSYVVKVYQKLVSRGIDMENLKPTENLNAMFDAKTPADWIDSDACMICSTQFTLLNRKHHCRSCGGVFCQLHSSKFIPLPDLGIFEPVRVCDNCFEDYDLKRKSSKGKKSKGKKRFTRSEDDDEDLRRAIELSLKENGRDADTFIPDTAKLEPLKKDPDEEDPDLKAAIEASLREHQQEEMRRKSQAKNMYNTSSPSVAPPIENNYDLSSNEEEDIHLFASLVERMKTQPPTAVLEDTQLQQLYQKVLGVRPKLNYALSDTVSKYNTVYEMNSKISDIMNMYDSMLEMQLRNISLSQQYAIPESGRNSYGYHQNMPQYDQPNSPQIIAQPQIHSPQQNERTILNYASPVSQHLSNGATTNTYQQGSALQNQQPAAPEPQPVSFEKPSTTSQLEGLILEEPSEPPYPDENTTIENPKIEQASERPYPDDHLKQENITSFDFPTVPLRKLSIHGSEQEVKEEPVQQEQLLIEL.

One can recognise a VHS domain in the interval 20–151; the sequence is NEKIPNGEID…KLVSRGIDME (132 aa). Residues 171 to 231 form an FYVE-type; atypical zinc finger; it reads WIDSDACMIC…VCDNCFEDYD (61 aa). Cys177, Cys180, Cys193, Cys196, Cys201, His204, Cys223, and Cys226 together coordinate Zn(2+). UIM domains are found at residues 253 to 272 and 292 to 311; these read DDDEDLRRAIELSLKENGRD and EEDPDLKAAIEASLREHQQE. 3 disordered regions span residues 273-294, 320-339, and 496-561; these read ADTFIPDTAKLEPLKKDPDEED, KNMYNTSSPSVAPPIENNYD, and QGSA…PDDH. Residues 281–294 are compositionally biased toward basic and acidic residues; that stretch reads AKLEPLKKDPDEED. Polar residues predominate over residues 320-329; the sequence is KNMYNTSSPS. Positions 547 to 561 are enriched in basic and acidic residues; it reads PKIEQASERPYPDDH.

It belongs to the VPS27 family. As to quaternary structure, component of the ESCRT-0 complex composed of HSE1 and VPS27.

The protein resides in the endosome membrane. Its function is as follows. Component of the ESCRT-0 complex which is the sorting receptor for ubiquitinated cargo proteins at the multivesicular body (MVB) and recruits ESCRT-I to the MVB outer membrane. The chain is Vacuolar protein sorting-associated protein 27 (VPS27) from Kluyveromyces lactis (strain ATCC 8585 / CBS 2359 / DSM 70799 / NBRC 1267 / NRRL Y-1140 / WM37) (Yeast).